Consider the following 335-residue polypeptide: Acetyl-coenzyme A carboxylase carboxyl transferase subunit alpha (335 aa).

In terms of domain architecture, CoA carboxyltransferase C-terminal spans Thr48 to Ala308.

This sequence belongs to the AccA family. In terms of assembly, acetyl-CoA carboxylase is a heterohexamer composed of biotin carboxyl carrier protein (AccB), biotin carboxylase (AccC) and two subunits each of ACCase subunit alpha (AccA) and ACCase subunit beta (AccD).

It is found in the cytoplasm. It catalyses the reaction N(6)-carboxybiotinyl-L-lysyl-[protein] + acetyl-CoA = N(6)-biotinyl-L-lysyl-[protein] + malonyl-CoA. It participates in lipid metabolism; malonyl-CoA biosynthesis; malonyl-CoA from acetyl-CoA: step 1/1. Its function is as follows. Component of the acetyl coenzyme A carboxylase (ACC) complex. First, biotin carboxylase catalyzes the carboxylation of biotin on its carrier protein (BCCP) and then the CO(2) group is transferred by the carboxyltransferase to acetyl-CoA to form malonyl-CoA. This chain is Acetyl-coenzyme A carboxylase carboxyl transferase subunit alpha, found in Chlorobium phaeovibrioides (strain DSM 265 / 1930) (Prosthecochloris vibrioformis (strain DSM 265)).